A 308-amino-acid polypeptide reads, in one-letter code: tRNA pseudouridine synthase B (308 aa).

The Nucleophile role is filled by Asp49.

This sequence belongs to the pseudouridine synthase TruB family. Type 1 subfamily.

It carries out the reaction uridine(55) in tRNA = pseudouridine(55) in tRNA. In terms of biological role, responsible for synthesis of pseudouridine from uracil-55 in the psi GC loop of transfer RNAs. The polypeptide is tRNA pseudouridine synthase B (Corynebacterium jeikeium (strain K411)).